The chain runs to 98 residues: Feather keratin 2 (98 aa).

Ser-2 is modified (N-acetylserine).

This sequence belongs to the avian keratin family. The avian keratins (F-ker, S-ker, C-ker and B-ker) are a complex mixture of very similar polypeptides.

This Gallus gallus (Chicken) protein is Feather keratin 2.